The primary structure comprises 548 residues: ETS domain-containing transcription factor ERF (548 aa).

Threonine 3 and threonine 7 each carry phosphothreonine. A phosphoserine mark is found at serine 20 and serine 24. The segment at residues 27 to 107 (IQLWHFILEL…KGKRFTYKFN (81 aa)) is a DNA-binding region (ETS). Disordered stretches follow at residues 130–169 (QSAPPVPSGGSHFRFPPSTPSEVLSPTEDPRSPPACSSSS), 184–225 (GSVS…LARL), and 280–304 (SPTLSPMYPSGGGGPSGSGGGSHFS). Phosphoserine occurs at positions 185 and 190. The segment covering 289 to 301 (SGGGGPSGSGGGS) has biased composition (gly residues). Phosphoserine is present on serine 327. A disordered region spans residues 342–478 (PQRPDKCPLP…GEAPGASQCM (137 aa)). Over residues 348 to 361 (CPLPPMAPETPPVP) the composition is skewed to pro residues. 2 stretches are compositionally biased toward low complexity: residues 362 to 373 (SSASSSSSSSSS) and 394 to 403 (KAVAGADKSG). Serine 431 and serine 435 each carry phosphoserine. Residues 431–451 (SEGESEEVEVTDISDEDEEDG) show a composition bias toward acidic residues. Residue threonine 441 is modified to Phosphothreonine. Serine 444 carries the post-translational modification Phosphoserine. Glycyl lysine isopeptide (Lys-Gly) (interchain with G-Cter in SUMO2) cross-links involve residues lysine 465, lysine 481, and lysine 512. The interval 492 to 548 (CRLEGGGGPAGGFEDEGEDKKVRGEGPGEAGGPLTPRRVSSDLQHATAQLSLEHRDS) is disordered. The residue at position 526 (threonine 526) is a Phosphothreonine; by MAPK1. A phosphoserine mark is found at serine 531, serine 532, and serine 548. Over residues 532 to 541 (SDLQHATAQL) the composition is skewed to polar residues.

This sequence belongs to the ETS family. In terms of processing, phosphorylated by multiple kinases including MAPK1/ERK2 at THR-526. Phosphorylation regulates the activity of ERF. Highest levels in testis, ovary, pancreas, and heart.

It localises to the nucleus. Its function is as follows. Potent transcriptional repressor that binds to the H1 element of the Ets2 promoter. May regulate other genes involved in cellular proliferation. Required for extraembryonic ectoderm differentiation, ectoplacental cone cavity closure, and chorioallantoic attachment. May be important for regulating trophoblast stem cell differentiation. The polypeptide is ETS domain-containing transcription factor ERF (ERF) (Homo sapiens (Human)).